A 348-amino-acid polypeptide reads, in one-letter code: D-alanine--D-alanine ligase (348 aa).

In terms of domain architecture, ATP-grasp spans 136-344 (KSVFKSYNLP…LEKLVANLIE (209 aa)). Residue 171–226 (NKIISYPCFIKPANLGSSVGITKAYSKEEFIAGIEFAAKYDERIIVEKSIEGRELE) coordinates ATP. 3 residues coordinate Mg(2+): Asp297, Glu311, and Asn313.

It belongs to the D-alanine--D-alanine ligase family. Mg(2+) serves as cofactor. The cofactor is Mn(2+).

The protein resides in the cytoplasm. The enzyme catalyses 2 D-alanine + ATP = D-alanyl-D-alanine + ADP + phosphate + H(+). It functions in the pathway cell wall biogenesis; peptidoglycan biosynthesis. In terms of biological role, cell wall formation. This chain is D-alanine--D-alanine ligase, found in Prochlorococcus marinus (strain NATL2A).